Here is a 339-residue protein sequence, read N- to C-terminus: Methionine import ATP-binding protein MetN 1 (339 aa).

Residues 2–241 (ISFNNVSKVY…PKTKTTQNFV (240 aa)) form the ABC transporter domain. 38-45 (GFSGAGKS) lines the ATP pocket.

Belongs to the ABC transporter superfamily. Methionine importer (TC 3.A.1.24) family. As to quaternary structure, the complex is composed of two ATP-binding proteins (MetN), two transmembrane proteins (MetI) and a solute-binding protein (MetQ).

The protein resides in the cell membrane. It carries out the reaction L-methionine(out) + ATP + H2O = L-methionine(in) + ADP + phosphate + H(+). It catalyses the reaction D-methionine(out) + ATP + H2O = D-methionine(in) + ADP + phosphate + H(+). Functionally, part of the ABC transporter complex MetNIQ involved in methionine import. Responsible for energy coupling to the transport system. The sequence is that of Methionine import ATP-binding protein MetN 1 from Bacillus thuringiensis subsp. konkukian (strain 97-27).